A 53-amino-acid polypeptide reads, in one-letter code: uncharacterized protein (53 aa).

A helical membrane pass occupies residues phenylalanine 4–tyrosine 24.

The protein resides in the host membrane. This is an uncharacterized protein from Acidianus bottle-shaped virus (isolate Italy/Pozzuoli) (ABV).